Consider the following 1446-residue polypeptide: Centrosomal protein of 164 kDa (1446 aa).

An interaction with ATRIP region spans residues 1–195 (MARRPILLGD…PPQGLKAAAC (195 aa)). The WW domain occupies 56 to 89 (APLPKGWKPCQNITGDLYYFNFDTGQSIWDHPCD). Disordered stretches follow at residues 106–132 (PGAIKKKDKKKKKEKKNKKDKETSKSP) and 159–185 (PPSALRGSQSVSLGSSADSGHLGEPTL). Residues 109 to 121 (IKKKDKKKKKEKK) show a composition bias toward basic residues. A compositionally biased stretch (polar residues) spans 164–176 (RGSQSVSLGSSAD). Residue Ser-202 is modified to Phosphoserine. 4 disordered regions span residues 217–238 (EETNEEDEEESDNQSVRSSSEL), 250–408 (GGNF…SFLG), 424–570 (GDTL…EPAA), and 830–849 (KRQEVEREHERKMDKMKEEH). Positions 218 to 228 (ETNEEDEEESD) are enriched in acidic residues. Over residues 257–277 (ESPRTSQPDKKDVSLDSDADR) the composition is skewed to basic and acidic residues. Residues 288–312 (GADSSVASANGSKSQGRGASPWNPQ) are compositionally biased toward polar residues. 2 stretches are compositionally biased toward basic and acidic residues: residues 355 to 372 (KEGECRRESAAKEPKEAS) and 384 to 397 (SEIHGHLKDARHSG). Positions 451–461 (SSIAEPQSKHT) are enriched in polar residues. 2 stretches are compositionally biased toward basic and acidic residues: residues 490 to 499 (PEWKEAEGPG) and 525 to 534 (ERAEEKHSQA). Positions 1143–1197 (EVLGNMRKNLNEETRHLDEMKSAMRKGHDLLKKKEEKLIQLESSLQEEVSDEDTL) form a coiled coil. A disordered region spans residues 1261-1287 (LGSLNSQPPPQGLGSQPPPPLFTSSLR). Residues 1267–1281 (QPPPQGLGSQPPPPL) are compositionally biased toward pro residues. Phosphoserine is present on residues Ser-1369 and Ser-1371.

In terms of assembly, interacts (via N-terminus) with ATRIP. Interacts with ATM, ATR and MDC1. Interacts with XPA (via N-terminus) upon UV irradiation. Interacts with CEP83, CCDC92, TTBK2, DVL3, NPHP3 and weakly with NPHP4. Interacts with DZIP1.

The protein resides in the cytoplasm. Its subcellular location is the cytoskeleton. It is found in the microtubule organizing center. It localises to the centrosome. The protein localises to the centriole. The protein resides in the nucleus. Its function is as follows. Plays a role in microtubule organization and/or maintenance for the formation of primary cilia (PC), a microtubule-based structure that protrudes from the surface of epithelial cells. Plays a critical role in G2/M checkpoint and nuclear divisions. A key player in the DNA damage-activated ATR/ATM signaling cascade since it is required for the proper phosphorylation of H2AX, RPA, CHEK2 and CHEK1. Plays a critical role in chromosome segregation, acting as a mediator required for the maintenance of genomic stability through modulation of MDC1, RPA and CHEK1. This is Centrosomal protein of 164 kDa from Mus musculus (Mouse).